Reading from the N-terminus, the 186-residue chain is Protein MTH_152 (186 aa).

The protein belongs to the flavoredoxin family. As to quaternary structure, homodimer. It depends on FMN as a cofactor.

The polypeptide is Protein MTH_152 (Methanothermobacter thermautotrophicus (strain ATCC 29096 / DSM 1053 / JCM 10044 / NBRC 100330 / Delta H) (Methanobacterium thermoautotrophicum)).